The chain runs to 312 residues: Ribosomal protein L11 methyltransferase (312 aa).

Thr-162, Gly-183, Asp-205, and Asn-248 together coordinate S-adenosyl-L-methionine.

Belongs to the methyltransferase superfamily. PrmA family.

It localises to the cytoplasm. The enzyme catalyses L-lysyl-[protein] + 3 S-adenosyl-L-methionine = N(6),N(6),N(6)-trimethyl-L-lysyl-[protein] + 3 S-adenosyl-L-homocysteine + 3 H(+). Methylates ribosomal protein L11. This Bacillus cereus (strain G9842) protein is Ribosomal protein L11 methyltransferase.